The primary structure comprises 124 residues: Ubiquinol-cytochrome-c reductase complex assembly factor 2 (124 aa).

The transit peptide at 1 to 13 (MASLRYRRFLKLC) directs the protein to the mitochondrion.

It is found in the mitochondrion matrix. It localises to the mitochondrion nucleoid. The protein resides in the mitochondrion. In terms of biological role, required for the assembly of the ubiquinol-cytochrome c reductase complex (mitochondrial respiratory chain complex III or cytochrome b-c1 complex). May play a role in the modulation of respiratory chain activities such as oxygen consumption and ATP production. May be involved in cytochrome b translation and/or stability. This is Ubiquinol-cytochrome-c reductase complex assembly factor 2 (uqcc2) from Xenopus tropicalis (Western clawed frog).